The primary structure comprises 287 residues: Elongation factor Ts (287 aa).

The tract at residues 80–83 (TDFL) is involved in Mg(2+) ion dislocation from EF-Tu.

The protein belongs to the EF-Ts family.

The protein resides in the cytoplasm. Its function is as follows. Associates with the EF-Tu.GDP complex and induces the exchange of GDP to GTP. It remains bound to the aminoacyl-tRNA.EF-Tu.GTP complex up to the GTP hydrolysis stage on the ribosome. In Pseudomonas savastanoi pv. phaseolicola (strain 1448A / Race 6) (Pseudomonas syringae pv. phaseolicola (strain 1448A / Race 6)), this protein is Elongation factor Ts.